The primary structure comprises 117 residues: G antigen 5 (117 aa).

Residues 1 to 117 (MSWRGRSTYY…PEEGEKQSQC (117 aa)) form a disordered region. 2 stretches are compositionally biased toward acidic residues: residues 32 to 45 (FSDEVEPATPEEGE) and 87 to 96 (ECEDGPDGQE). A compositionally biased stretch (basic and acidic residues) spans 103 to 117 (EEVKTPEEGEKQSQC).

This sequence belongs to the GAGE family. Expressed in a variety of tumor tissues but not in normal tissues, except testis.

The sequence is that of G antigen 5 (GAGE5) from Homo sapiens (Human).